Reading from the N-terminus, the 295-residue chain is Diaminopimelate epimerase (295 aa).

Positions 13, 46, and 66 each coordinate substrate. The active-site Proton donor is the Cys-75. Substrate-binding positions include 76–77, Asn-162, Asn-195, and 213–214; these read GN and ER. The active-site Proton acceptor is Cys-222. 223 to 224 provides a ligand contact to substrate; that stretch reads GT.

It belongs to the diaminopimelate epimerase family. As to quaternary structure, homodimer.

It localises to the cytoplasm. It carries out the reaction (2S,6S)-2,6-diaminopimelate = meso-2,6-diaminopimelate. Its pathway is amino-acid biosynthesis; L-lysine biosynthesis via DAP pathway; DL-2,6-diaminopimelate from LL-2,6-diaminopimelate: step 1/1. Its function is as follows. Catalyzes the stereoinversion of LL-2,6-diaminopimelate (L,L-DAP) to meso-diaminopimelate (meso-DAP), a precursor of L-lysine and an essential component of the bacterial peptidoglycan. The protein is Diaminopimelate epimerase of Psychrobacter cryohalolentis (strain ATCC BAA-1226 / DSM 17306 / VKM B-2378 / K5).